We begin with the raw amino-acid sequence, 776 residues long: Endonuclease MutS2 (776 aa).

330 to 337 (GPNTGGKT) provides a ligand contact to ATP. The Smr domain occupies 701–776 (LDLRGMRYEE…GSGATIAILK (76 aa)).

It belongs to the DNA mismatch repair MutS family. MutS2 subfamily. In terms of assembly, homodimer. Binds to stalled ribosomes, contacting rRNA.

In terms of biological role, endonuclease that is involved in the suppression of homologous recombination and thus may have a key role in the control of bacterial genetic diversity. Its function is as follows. Acts as a ribosome collision sensor, splitting the ribosome into its 2 subunits. Detects stalled/collided 70S ribosomes which it binds and splits by an ATP-hydrolysis driven conformational change. Acts upstream of the ribosome quality control system (RQC), a ribosome-associated complex that mediates the extraction of incompletely synthesized nascent chains from stalled ribosomes and their subsequent degradation. Probably generates substrates for RQC. This Lactococcus lactis subsp. lactis (strain IL1403) (Streptococcus lactis) protein is Endonuclease MutS2.